A 282-amino-acid chain; its full sequence is uncharacterized protein (282 aa).

This is an uncharacterized protein from Rickettsia conorii (strain ATCC VR-613 / Malish 7).